A 179-amino-acid chain; its full sequence is Large ribosomal subunit protein uL6 (179 aa).

The protein belongs to the universal ribosomal protein uL6 family. Part of the 50S ribosomal subunit.

This protein binds to the 23S rRNA, and is important in its secondary structure. It is located near the subunit interface in the base of the L7/L12 stalk, and near the tRNA binding site of the peptidyltransferase center. The polypeptide is Large ribosomal subunit protein uL6 (Syntrophomonas wolfei subsp. wolfei (strain DSM 2245B / Goettingen)).